Reading from the N-terminus, the 198-residue chain is Synaptobrevin homolog YKT6-A (198 aa).

The 120-residue stretch at 8–127 (VLYKGENKVH…IQYNALDSYL (120 aa)) folds into the Longin domain. The 61-residue stretch at 138-198 (PMSKVQAELD…RKQNSCCDIM (61 aa)) folds into the v-SNARE coiled-coil homology domain. Residue Cys194 is the site of S-palmitoyl cysteine attachment. Cysteine methyl ester is present on Cys195. Residue Cys195 is the site of S-farnesyl cysteine attachment. Residues 196–198 (DIM) constitute a propeptide, removed in mature form.

It belongs to the synaptobrevin family. Post-translationally, palmitoylated; catalyzes its own palmitoylation. Palmitoylation is required for Golgi targeting. Farnesylation is required for Golgi targeting.

The protein localises to the cytoplasm. The protein resides in the cytosol. It is found in the cytoplasmic vesicle membrane. Its subcellular location is the golgi apparatus membrane. Its function is as follows. Vesicular soluble NSF attachment protein receptor (v-SNARE) mediating vesicle docking and fusion to a specific acceptor cellular compartment. Functions in endoplasmic reticulum to Golgi transport; as part of a SNARE complex composed of GOSR1, GOSR2 and STX5. Functions in early/recycling endosome to TGN transport; as part of a SNARE complex composed of BET1L, GOSR1 and STX5. Has a S-palmitoyl transferase activity. In Xenopus laevis (African clawed frog), this protein is Synaptobrevin homolog YKT6-A (ykt6-a).